A 707-amino-acid chain; its full sequence is ATP-dependent RNA helicase DHX33 (707 aa).

The interval 1–64 (MPEEAGFPPA…LAQPSASPYP (64 aa)) is disordered. A required for nucleolar location region spans residues 1-80 (MPEEAGFPPA…RRSLPIFQAR (80 aa)). Over residues 39 to 49 (GSGGRGGGGGR) the composition is skewed to gly residues. The span at 50-64 (RQQPPLAQPSASPYP) shows a compositional bias: low complexity. In terms of domain architecture, Helicase ATP-binding spans 84–252 (LAQLRNLDNA…FNGAPVLYLE (169 aa)). Position 97–104 (97–104 (GETGSGKT)) interacts with ATP. The short motif at 194-197 (DEAH) is the DEAH box element. The 174-residue stretch at 277-450 (SVFQIHQEAP…SVMLQLLAMK (174 aa)) folds into the Helicase C-terminal domain. The tract at residues 471 to 562 (AIAQLDLLGA…ISSEGDHMTL (92 aa)) is HA2; required for interaction with EIF3G and RPL26. Residues 547-558 (GVRKKFISSEGD) carry the Critical for rDNA-binding motif.

It belongs to the DEAD box helicase family. DEAH subfamily. In terms of assembly, interacts with UBTF. Interacts with DDX3X, EIF3G and EIF3H; the interaction is independent of RNA. Interacts (via HA2 region and Helicase C-terminal domain) with the components of the large ribosomal subunit RPL3, RPL7, RPL26 and RPL27. Interacts (via DEAH box) with NLRP3 (via NACHT domain). Binds to mRNA. Binds to double-stranded RNA (via the helicase C-terminal domain). Interacts (via the helicase C-terminal domain) with MAVS. Ubiquitinated, leading to its degradation by the proteasome. Deubiquitinated by USP36.

The protein localises to the nucleus. It localises to the nucleolus. It is found in the nucleoplasm. The protein resides in the cytoplasm. Its subcellular location is the inflammasome. The catalysed reaction is ATP + H2O = ADP + phosphate + H(+). Implicated in nucleolar organization, ribosome biogenesis, protein synthesis and cytoplasmic dsRNA sensing. Stimulates RNA polymerase I transcription of the 47S precursor rRNA. Associates with ribosomal DNA (rDNA) loci where it is involved in POLR1A recruitment. In the cytoplasm, promotes elongation-competent 80S ribosome assembly at the late stage of mRNA translation initiation. Senses cytosolic dsRNA mediating NLRP3 inflammasome formation in macrophages and type I interferon production in myeloid dendritic cells. Required for NLRP3 activation induced by viral dsRNA and bacterial RNA. In dendritic cells, required for induction of type I interferon production induced by cytoplasmic dsRNA via the activation of MAPK and NF-kappa-B signaling pathways. The sequence is that of ATP-dependent RNA helicase DHX33 from Homo sapiens (Human).